The chain runs to 449 residues: Probable glucuronosyltransferase 47 A (449 aa).

Over 1-31 (MEHPLECADSCSLAMSWFCNKKCRGWGLMKR) the chain is Cytoplasmic. A helical; Signal-anchor for type II membrane protein transmembrane segment spans residues 32-52 (TVVASGLRSVVLLLLFIYFVQ). The Lumenal segment spans residues 53–449 (DVTAEMGHQR…GDLYPWGNDL (397 aa)). N172 and N433 each carry an N-linked (GlcNAc...) asparagine glycan.

This sequence belongs to the glycosyltransferase 47 family. In terms of tissue distribution, mostly expressed in newly formed or expanding tissues.

Its subcellular location is the golgi apparatus membrane. Functionally, involved in the synthesis of glucuronoxylan hemicellulose in secondary cell walls. This Physcomitrium patens (Spreading-leaved earth moss) protein is Probable glucuronosyltransferase 47 A.